Consider the following 128-residue polypeptide: CD59 glycoprotein (128 aa).

A signal peptide spans 1 to 25 (MGIQGGSVLFGLLLVLAVFCHSGHS). The region spanning 26–108 (LQCYNCPNPT…QLENGGTSLS (83 aa)) is the UPAR/Ly6 domain. 3 disulfide bridges follow: C28-C51, C31-C38, and C44-C64. N43 carries an N-linked (GlcNAc...) asparagine glycan. K66 is a glycosylation site (N-linked (Glc) (glycation) lysine). 2 disulfides stabilise this stretch: C70/C88 and C89/C94. O-linked (GalNAc...) threonine glycosylation is found at T76 and T77. N102 is lipidated: GPI-anchor amidated asparagine. The propeptide at 103 to 128 (GGTSLSEKTVLLLVTPFLAAAWSLHP) is removed in mature form.

Interacts with T-cell surface antigen CD2. N- and O-glycosylated. The N-glycosylation mainly consists of a family of biantennary complex-type structures with and without lactosamine extensions and outer arm fucose residues. Also significant amounts of triantennary complexes (22%). Variable sialylation also present in the Asn-43 oligosaccharide. The predominant O-glycans are mono-sialylated forms of the disaccharide, Gal-beta-1,3GalNAc, and their sites of attachment are probably on Thr-76 and Thr-77. The GPI-anchor of soluble urinary CD59 has no inositol-associated phospholipid, but is composed of seven different GPI-anchor variants of one or more monosaccharide units. Major variants contain sialic acid, mannose and glucosamine. Sialic acid linked to an N-acetylhexosamine-galactose arm is present in two variants. Post-translationally, glycated. Glycation is found in diabetic subjects, but only at minimal levels in nondiabetic subjects. Glycated CD59 lacks MAC-inhibitory function and confers to vascular complications of diabetes.

It is found in the cell membrane. The protein resides in the secreted. Its function is as follows. Potent inhibitor of the complement membrane attack complex (MAC) action, which protects human cells from damage during complement activation. Acts by binding to the beta-haipins of C8 (C8A and C8B) components of the assembling MAC, forming an intermolecular beta-sheet that prevents incorporation of the multiple copies of C9 required for complete formation of the osmolytic pore. In terms of biological role, the soluble form from urine retains its specific complement binding activity, but exhibits greatly reduced ability to inhibit complement membrane attack complex (MAC) assembly on cell membranes. The polypeptide is CD59 glycoprotein (Homo sapiens (Human)).